The following is a 247-amino-acid chain: Large ribosomal subunit protein uL24m (247 aa).

In terms of domain architecture, KOW spans 84 to 117; that stretch reads FFRGDRIEVLVGKDKGKQGIVTQVIPERNWVIVE.

It belongs to the universal ribosomal protein uL24 family. In terms of assembly, component of the mitochondrial ribosome large subunit (39S) which comprises a 16S rRNA and about 50 distinct proteins.

Its subcellular location is the mitochondrion. In Drosophila pseudoobscura pseudoobscura (Fruit fly), this protein is Large ribosomal subunit protein uL24m (mRpL24).